We begin with the raw amino-acid sequence, 98 residues long: NADH-ubiquinone oxidoreductase chain 4L (98 aa).

3 consecutive transmembrane segments (helical) span residues 1-21 (MTLI…GLLM), 29-49 (ALLC…LTIL), and 61-81 (IILL…LVMV).

It belongs to the complex I subunit 4L family. Core subunit of respiratory chain NADH dehydrogenase (Complex I) which is composed of 45 different subunits.

Its subcellular location is the mitochondrion inner membrane. The catalysed reaction is a ubiquinone + NADH + 5 H(+)(in) = a ubiquinol + NAD(+) + 4 H(+)(out). Core subunit of the mitochondrial membrane respiratory chain NADH dehydrogenase (Complex I) which catalyzes electron transfer from NADH through the respiratory chain, using ubiquinone as an electron acceptor. Part of the enzyme membrane arm which is embedded in the lipid bilayer and involved in proton translocation. The polypeptide is NADH-ubiquinone oxidoreductase chain 4L (MT-ND4L) (Balaenoptera physalus (Fin whale)).